We begin with the raw amino-acid sequence, 230 residues long: DNA repair protein rdl1 (230 aa).

Interacts with rlp1 and sws1.

It localises to the cytoplasm. Its subcellular location is the nucleus. Involved in homologous recombination where it functions at an early stage of recombination in a pre-recombinogenic complex with rlp1 and sws1. Also has a role at a later stage of recombination in association with the rhp55-rhp57 complex. The sequence is that of DNA repair protein rdl1 (rdl1) from Schizosaccharomyces pombe (strain 972 / ATCC 24843) (Fission yeast).